A 666-amino-acid chain; its full sequence is tRNA 5-methylaminomethyl-2-thiouridine biosynthesis bifunctional protein MnmC (666 aa).

A tRNA (mnm(5)s(2)U34)-methyltransferase region spans residues 1–253 (MSSPFVPIIT…KRHMICAHYE (253 aa)). The interval 283–666 (VGGGLAGCFI…FLRKKIIQGP (384 aa)) is FAD-dependent cmnm(5)s(2)U34 oxidoreductase.

The protein in the N-terminal section; belongs to the methyltransferase superfamily. tRNA (mnm(5)s(2)U34)-methyltransferase family. It in the C-terminal section; belongs to the DAO family. FAD serves as cofactor.

The protein resides in the cytoplasm. It catalyses the reaction 5-aminomethyl-2-thiouridine(34) in tRNA + S-adenosyl-L-methionine = 5-methylaminomethyl-2-thiouridine(34) in tRNA + S-adenosyl-L-homocysteine + H(+). Catalyzes the last two steps in the biosynthesis of 5-methylaminomethyl-2-thiouridine (mnm(5)s(2)U) at the wobble position (U34) in tRNA. Catalyzes the FAD-dependent demodification of cmnm(5)s(2)U34 to nm(5)s(2)U34, followed by the transfer of a methyl group from S-adenosyl-L-methionine to nm(5)s(2)U34, to form mnm(5)s(2)U34. The sequence is that of tRNA 5-methylaminomethyl-2-thiouridine biosynthesis bifunctional protein MnmC from Legionella pneumophila (strain Lens).